The sequence spans 154 residues: Aspartate carbamoyltransferase regulatory chain (154 aa).

Zn(2+)-binding residues include C109, C114, C138, and C141.

The protein belongs to the PyrI family. As to quaternary structure, contains catalytic and regulatory chains. It depends on Zn(2+) as a cofactor.

In terms of biological role, involved in allosteric regulation of aspartate carbamoyltransferase. This Serratia proteamaculans (strain 568) protein is Aspartate carbamoyltransferase regulatory chain.